A 375-amino-acid polypeptide reads, in one-letter code: UDP-N-acetylglucosamine--N-acetylmuramyl-(pentapeptide) pyrophosphoryl-undecaprenol N-acetylglucosamine transferase (375 aa).

Residues 13–15, Asn-124, Arg-165, Ser-193, and Gln-294 contribute to the UDP-N-acetyl-alpha-D-glucosamine site; that span reads TGG.

This sequence belongs to the glycosyltransferase 28 family. MurG subfamily.

Its subcellular location is the cell inner membrane. The enzyme catalyses di-trans,octa-cis-undecaprenyl diphospho-N-acetyl-alpha-D-muramoyl-L-alanyl-D-glutamyl-meso-2,6-diaminopimeloyl-D-alanyl-D-alanine + UDP-N-acetyl-alpha-D-glucosamine = di-trans,octa-cis-undecaprenyl diphospho-[N-acetyl-alpha-D-glucosaminyl-(1-&gt;4)]-N-acetyl-alpha-D-muramoyl-L-alanyl-D-glutamyl-meso-2,6-diaminopimeloyl-D-alanyl-D-alanine + UDP + H(+). It functions in the pathway cell wall biogenesis; peptidoglycan biosynthesis. Its function is as follows. Cell wall formation. Catalyzes the transfer of a GlcNAc subunit on undecaprenyl-pyrophosphoryl-MurNAc-pentapeptide (lipid intermediate I) to form undecaprenyl-pyrophosphoryl-MurNAc-(pentapeptide)GlcNAc (lipid intermediate II). The polypeptide is UDP-N-acetylglucosamine--N-acetylmuramyl-(pentapeptide) pyrophosphoryl-undecaprenol N-acetylglucosamine transferase (Mesorhizobium japonicum (strain LMG 29417 / CECT 9101 / MAFF 303099) (Mesorhizobium loti (strain MAFF 303099))).